The following is a 361-amino-acid chain: Epoxyqueuosine reductase (361 aa).

D147 (proton donor) is an active-site residue. Residues 193–222 (VDPAMDSEHCGRCSACLDICPTAAFVGPYR) form the 4Fe-4S ferredoxin-type domain. 8 residues coordinate [4Fe-4S] cluster: C202, C205, C208, C212, C228, C255, C258, and C262.

The protein belongs to the QueG family. In terms of assembly, monomer. The cofactor is cob(II)alamin. It depends on [4Fe-4S] cluster as a cofactor.

Its subcellular location is the cytoplasm. It catalyses the reaction epoxyqueuosine(34) in tRNA + AH2 = queuosine(34) in tRNA + A + H2O. It functions in the pathway tRNA modification; tRNA-queuosine biosynthesis. Catalyzes the conversion of epoxyqueuosine (oQ) to queuosine (Q), which is a hypermodified base found in the wobble positions of tRNA(Asp), tRNA(Asn), tRNA(His) and tRNA(Tyr). This Pseudomonas aeruginosa (strain ATCC 15692 / DSM 22644 / CIP 104116 / JCM 14847 / LMG 12228 / 1C / PRS 101 / PAO1) protein is Epoxyqueuosine reductase.